A 197-amino-acid chain; its full sequence is Phosphoheptose isomerase (197 aa).

One can recognise an SIS domain in the interval 36–197; that stretch reads MVNALLNEGK…IDRQLFGSEE (162 aa). Residue 51 to 53 coordinates substrate; that stretch reads NGG. Positions 60 and 64 each coordinate Zn(2+). Residues Glu64, 93 to 94, 119 to 121, Ser124, and Gln174 contribute to the substrate site; these read ND and STS. Zn(2+) contacts are provided by Gln174 and His182.

The protein belongs to the SIS family. GmhA subfamily. In terms of assembly, homotetramer. Requires Zn(2+) as cofactor.

The protein resides in the cytoplasm. The enzyme catalyses 2 D-sedoheptulose 7-phosphate = D-glycero-alpha-D-manno-heptose 7-phosphate + D-glycero-beta-D-manno-heptose 7-phosphate. Its pathway is carbohydrate biosynthesis; D-glycero-D-manno-heptose 7-phosphate biosynthesis; D-glycero-alpha-D-manno-heptose 7-phosphate and D-glycero-beta-D-manno-heptose 7-phosphate from sedoheptulose 7-phosphate: step 1/1. In terms of biological role, catalyzes the isomerization of sedoheptulose 7-phosphate in D-glycero-D-manno-heptose 7-phosphate. This chain is Phosphoheptose isomerase, found in Pseudomonas aeruginosa (strain LESB58).